A 210-amino-acid chain; its full sequence is MNSEIESSLTLLKSVEKLVQATSVYKNEDNEEIFLQLKRERQENSNSHEETETLFHESLDRLMKLSSIAGSKVQYELSLNNLYNLLLRTRKQEEEEAFIFPTVSTEEFALEQITFEVSDQMDDDKDSEDDILIKGEEIKKSKKKRQRLDNSTKEFLEKVFEKNKQPNRRERELIAEKHGVSLSQIRVWFTNKRMRKKEPKSKAKSSSNST.

Positions Ser-141–Lys-200 form a DNA-binding region, homeobox.

Belongs to the MATA1 family. Forms a heterodimer with ALPHA2.

It localises to the nucleus. Mating type proteins are sequence specific DNA-binding proteins that act as master switches in yeast differentiation by controlling gene expression in a cell type-specific fashion. Transcriptional corepressor that acts in conjunction with ALPHA2 to repress transcription both of homozygote-specific genes and of genes necessary for the white-opaque switch, a prerequisite for mating. This Candida albicans (strain SC5314 / ATCC MYA-2876) (Yeast) protein is Mating-type-like protein A1 (MTLA1).